The sequence spans 635 residues: Transaminated amino acid decarboxylase (635 aa).

Lys-588 participates in a covalent cross-link: Glycyl lysine isopeptide (Lys-Gly) (interchain with G-Cter in ubiquitin).

Belongs to the TPP enzyme family. The cofactor is Mg(2+). Thiamine diphosphate serves as cofactor.

Its subcellular location is the cytoplasm. The enzyme catalyses 4-methyl-2-oxopentanoate + H(+) = 3-methylbutanal + CO2. The catalysed reaction is (S)-3-methyl-2-oxopentanoate + H(+) = 2-methylbutanal + CO2. It carries out the reaction indole-3-pyruvate + H(+) = indole-3-acetaldehyde + CO2. It catalyses the reaction 3-phenylpyruvate + H(+) = 2-phenylacetaldehyde + CO2. The enzyme catalyses 4-methylsulfanyl-2-oxobutanoate + H(+) = 3-methylsulfanylpropanal + CO2. The catalysed reaction is 3-(4-hydroxyphenyl)pyruvate + H(+) = (4-hydroxyphenyl)acetaldehyde + CO2. It functions in the pathway amino-acid degradation; Ehrlich pathway. In terms of biological role, one of five 2-oxo acid decarboxylases (PDC1, PDC5, PDC6, ARO10, and THI3) involved in amino acid catabolism. The enzyme catalyzes the decarboxylation of amino acids, which, in a first step, have been transaminated to the corresponding 2-oxo acids (alpha-keto-acids). In a third step, the resulting aldehydes are reduced to alcohols, collectively referred to as fusel oils or alcohols. Its preferred substrates are the transaminated amino acids derived from phenylalanine (phenylpyruvate), tryptophan (3-(indol-3-yl)pyruvate), and probably tyrosine (4-hydroxyphenylpyruvate), but also isoleucine ((3S)-3-methyl-2-oxopentanoate, also alpha-keto-beta-methylvalerate) and methionine (4-methylthio-2-oxobutanoate), whereas transaminated leucine (4-methyl-2-oxopentanoate, also alpha-keto-isocaproate) is a low efficiency substrate and transaminated valine and pyruvate are no substrates. In analogy to the pyruvate decarboxylases the enzyme may in a side-reaction catalyze condensation (or carboligation) reactions leading to the formation of 2-hydroxy ketone, collectively called acyloins. This chain is Transaminated amino acid decarboxylase (ARO10), found in Saccharomyces cerevisiae (strain ATCC 204508 / S288c) (Baker's yeast).